Consider the following 456-residue polypeptide: uncharacterized protein (456 aa).

2 stretches are compositionally biased toward basic and acidic residues: residues 181–210 and 217–231; these read DQRK…DKKV and KEIE…ENEE. The interval 181-231 is disordered; it reads DQRKESIVNDERKKNPEFREKPDKNEDKKVKPPPSLKEIENKGIDHEENEE. Positions 216–248 form a coiled coil; the sequence is LKEIENKGIDHEENEEDKKRELMFKLQLLQKQY. Residues 347-365 traverse the membrane as a helical segment; sequence LALAILFNAVWFIAAKMIM. Residues 383–407 show a composition bias toward polar residues; sequence NKSGTTPNSVSPRTWGNSKSPQSEF. Positions 383–456 are disordered; the sequence is NKSGTTPNSV…MREQGIETLK (74 aa). Residues 441 to 456 show a composition bias toward basic and acidic residues; it reads DESRREMREQGIETLK.

Belongs to the IIV-6 067R family.

Its subcellular location is the membrane. This is an uncharacterized protein from Invertebrate iridescent virus 6 (IIV-6).